A 105-amino-acid polypeptide reads, in one-letter code: Putative zinc finger protein 861 (105 aa).

A C2H2-type zinc finger spans residues 75–97 (YTCKPCGNAFRFHHSFHIHERPH).

The protein is Putative zinc finger protein 861 (ZNF861P) of Homo sapiens (Human).